We begin with the raw amino-acid sequence, 481 residues long: MAASQLAALEGEELGAGEPALTKASPAVLYSEGQRLALEALLSSGEETFWACVQQERLPPFLSADEAQALATAAEDWLVPSQEPGAAGTGTAITDGDVGSLTYWPRQSEEPAPLLRLGWPEDTAWKGITRAQLYTQPPGEGQPPIKELVHQEIQAARKLVAVVMDVFTDPDLLRDMVDAATRRWIPVYLLLDHQHLPAFLALAQQLGVNLWTTENLDIRTVQGHTFQSRRRRQVSGHVREKFVLLDGDRVISGSYSFTWSDSRLHRSLVTLLTGEIADAFNQEFRVLYAASRPLSAAPARSPLFSPPEGPQLPRSPHRVALRCPVAPVAPLLSDGPLAQRLAACHILERDKQETPTTTGPALSDILRSVQRTRTTSGPPTRPSRSLWDLSRLSQLSGSSDGENESKKFWVSKDTPARALMRQRGTGGGPRAEMDSRSQPWGGPLPSIPARRLRYLSPAQRRLGDNATTSDWASGSGSGRRR.

Residues 1–296 form a DUF1669 region; the sequence is MAASQLAALE…LYAASRPLSA (296 aa). Residues 351–481 form a disordered region; the sequence is KQETPTTTGP…ASGSGSGRRR (131 aa). Residues 371–385 are compositionally biased toward low complexity; it reads RTRTTSGPPTRPSRS. Composition is skewed to polar residues over residues 391–400 and 465–474; these read RLSQLSGSSD and NATTSDWASG.

This sequence belongs to the FAM83 family. In terms of assembly, directly interacts (via DUF1669) with CSNK1A1, CSNK1A1L, CSNK1D and CSNK1E. May interact with RAF1.

The protein localises to the cytoplasm. It localises to the perinuclear region. In terms of biological role, may play a role in MAPK signaling. The polypeptide is Protein FAM83E (Mus musculus (Mouse)).